Consider the following 283-residue polypeptide: 2-dehydro-3-deoxyphosphooctonate aldolase (283 aa).

It belongs to the KdsA family.

The protein localises to the cytoplasm. The catalysed reaction is D-arabinose 5-phosphate + phosphoenolpyruvate + H2O = 3-deoxy-alpha-D-manno-2-octulosonate-8-phosphate + phosphate. The protein operates within carbohydrate biosynthesis; 3-deoxy-D-manno-octulosonate biosynthesis; 3-deoxy-D-manno-octulosonate from D-ribulose 5-phosphate: step 2/3. It functions in the pathway bacterial outer membrane biogenesis; lipopolysaccharide biosynthesis. This Prochlorococcus marinus (strain MIT 9313) protein is 2-dehydro-3-deoxyphosphooctonate aldolase.